Reading from the N-terminus, the 215-residue chain is Thiamine-phosphate synthase (215 aa).

4-amino-2-methyl-5-(diphosphooxymethyl)pyrimidine is bound by residues 37–41 and Asn69; that span reads QLRIK. Mg(2+) is bound by residues Asp70 and Asp89. 4-amino-2-methyl-5-(diphosphooxymethyl)pyrimidine is bound at residue Ser108. 134–136 lines the 2-[(2R,5Z)-2-carboxy-4-methylthiazol-5(2H)-ylidene]ethyl phosphate pocket; it reads TQT. Lys137 lines the 4-amino-2-methyl-5-(diphosphooxymethyl)pyrimidine pocket. Residues Gly166 and 186 to 187 each bind 2-[(2R,5Z)-2-carboxy-4-methylthiazol-5(2H)-ylidene]ethyl phosphate; that span reads VS.

This sequence belongs to the thiamine-phosphate synthase family. It depends on Mg(2+) as a cofactor.

The enzyme catalyses 2-[(2R,5Z)-2-carboxy-4-methylthiazol-5(2H)-ylidene]ethyl phosphate + 4-amino-2-methyl-5-(diphosphooxymethyl)pyrimidine + 2 H(+) = thiamine phosphate + CO2 + diphosphate. The catalysed reaction is 2-(2-carboxy-4-methylthiazol-5-yl)ethyl phosphate + 4-amino-2-methyl-5-(diphosphooxymethyl)pyrimidine + 2 H(+) = thiamine phosphate + CO2 + diphosphate. It carries out the reaction 4-methyl-5-(2-phosphooxyethyl)-thiazole + 4-amino-2-methyl-5-(diphosphooxymethyl)pyrimidine + H(+) = thiamine phosphate + diphosphate. The protein operates within cofactor biosynthesis; thiamine diphosphate biosynthesis; thiamine phosphate from 4-amino-2-methyl-5-diphosphomethylpyrimidine and 4-methyl-5-(2-phosphoethyl)-thiazole: step 1/1. Functionally, condenses 4-methyl-5-(beta-hydroxyethyl)thiazole monophosphate (THZ-P) and 2-methyl-4-amino-5-hydroxymethyl pyrimidine pyrophosphate (HMP-PP) to form thiamine monophosphate (TMP). In Yersinia pestis (strain Pestoides F), this protein is Thiamine-phosphate synthase.